The chain runs to 161 residues: Probable chemoreceptor glutamine deamidase CheD (161 aa).

It belongs to the CheD family.

It carries out the reaction L-glutaminyl-[protein] + H2O = L-glutamyl-[protein] + NH4(+). Functionally, probably deamidates glutamine residues to glutamate on methyl-accepting chemotaxis receptors (MCPs), playing an important role in chemotaxis. This is Probable chemoreceptor glutamine deamidase CheD from Trichlorobacter lovleyi (strain ATCC BAA-1151 / DSM 17278 / SZ) (Geobacter lovleyi).